Reading from the N-terminus, the 797-residue chain is Complex I intermediate-associated protein 84, mitochondrial (797 aa).

A mitochondrion-targeting transit peptide spans 1 to 69 (MRSHLARNAT…ALCTRTSKRT (69 aa)).

It localises to the mitochondrion. Chaperone protein involved in the assembly of the mitochondrial NADH:ubiquinone oxidoreductase complex (complex I). The chain is Complex I intermediate-associated protein 84, mitochondrial (cia84) from Neurospora crassa (strain ATCC 24698 / 74-OR23-1A / CBS 708.71 / DSM 1257 / FGSC 987).